A 317-amino-acid polypeptide reads, in one-letter code: MNHLKTAILLAGLTALFMAVGFAIGGRGGMMIAFVVASATNLFSYWNSDKMVLRMYGAREVDETTAPDFVRMVHELARRADLPPPRVFIMDNPQPNAFATGRNPQNAAVAATTGLLQSLSPEEVAGVMAHELAHIKHYDTLTMTMTATIAGAISMLANFGLLFGGGNRNNNNPFGAIGTILMVILAPLAAMLVQMAISRSREYEADRGGAEILGRPMALASALAKISGAAHEVPNYEAESNPATAHMFIINPLSGARMDNLFSTHPAVENRIAALRALSQQMGGGGFAPGPAPAVRPPGGNPWGVDPGGGQRRGPWG.

Transmembrane regions (helical) follow at residues 6–26 (TAILLAGLTALFMAVGFAIGG) and 28–48 (GGMMIAFVVASATNLFSYWNS). Residue His-130 coordinates Zn(2+). Residue Glu-131 is part of the active site. His-134 provides a ligand contact to Zn(2+). A run of 2 helical transmembrane segments spans residues 145-165 (MTATIAGAISMLANFGLLFGG) and 173-193 (PFGAIGTILMVILAPLAAMLV). Glu-202 is a Zn(2+) binding site. The segment at 283–317 (GGGGFAPGPAPAVRPPGGNPWGVDPGGGQRRGPWG) is disordered. Residues 290-300 (GPAPAVRPPGG) are compositionally biased toward pro residues. Positions 306–317 (DPGGGQRRGPWG) are enriched in gly residues.

It belongs to the peptidase M48B family. Zn(2+) serves as cofactor.

The protein resides in the cell inner membrane. In Xanthobacter autotrophicus (strain ATCC BAA-1158 / Py2), this protein is Protease HtpX homolog.